Consider the following 350-residue polypeptide: Protein RecA (350 aa).

66 to 73 (GPESSGKT) provides a ligand contact to ATP.

The protein belongs to the RecA family.

Its subcellular location is the cytoplasm. Can catalyze the hydrolysis of ATP in the presence of single-stranded DNA, the ATP-dependent uptake of single-stranded DNA by duplex DNA, and the ATP-dependent hybridization of homologous single-stranded DNAs. It interacts with LexA causing its activation and leading to its autocatalytic cleavage. This Nocardioides sp. (strain ATCC BAA-499 / JS614) protein is Protein RecA.